The sequence spans 562 residues: Furostanol glycoside 26-O-beta-glucosidase (562 aa).

The transit peptide at M1–R44 directs the protein to the chloroplast. A beta-D-glucoside is bound by residues Q110, H214, and N259 to E260. E260 functions as the Proton donor in the catalytic mechanism. A disulfide bridge connects residues C279 and C285. A beta-D-glucoside contacts are provided by residues Y401, E472, W518, E525–W526, and F534. The active-site Nucleophile is E472.

Belongs to the glycosyl hydrolase 1 family. Heterodimer. The N-terminus of the larger subunit is blocked and the smaller subunit might be derived from the larger one.

The protein resides in the plastid. Its subcellular location is the chloroplast. The catalysed reaction is protodioscin + H2O = 26-deglucoprotodioscin + D-glucose. Partially inhibited by glucono-1,5-lactone, conduritol beta-epoxide and diosgenin, but not by beta-sitosterol or cholesterol. Functionally, beta-glucosidase involved in saponin metabolism. Highly specific for the cleavage of C-26-bound glucose moiety of furostanol glycosides such as protogracillin and protodioscin. No activity with nuatigenin glycoside. Convers furostanol glycosides to spirostanol glycosides. The sequence is that of Furostanol glycoside 26-O-beta-glucosidase from Hellenia speciosa (Crepe ginger).